A 32-amino-acid polypeptide reads, in one-letter code: Delta-conotoxin-like CnVIC (32 aa).

3 disulfides stabilise this stretch: Cys-3–Cys-18, Cys-10–Cys-22, and Cys-17–Cys-27. 4-hydroxyproline occurs at positions 6 and 14.

The protein belongs to the conotoxin O1 superfamily. Expressed by the venom duct.

Its subcellular location is the secreted. Its function is as follows. Delta-conotoxins bind to site 6 of voltage-gated sodium channels (Nav) and inhibit the inactivation process. This toxin acts on Nav1.2/SCN2A, Nav1.4/SCN4A, Nav1.5/SCN5A (weak activity), Nav1.6/SCN8A (EC(50)=2.5 uM). This is Delta-conotoxin-like CnVIC from Conus consors (Singed cone).